A 1179-amino-acid chain; its full sequence is DNA-directed RNA polymerase subunit beta (1179 aa).

Over residues 1153–1162 the composition is skewed to acidic residues; it reads MREMEDEDEG. Residues 1153–1179 form a disordered region; it reads MREMEDEDEGNGEKLNLVLEGGSLNEE.

This sequence belongs to the RNA polymerase beta chain family. In terms of assembly, the RNAP catalytic core consists of 2 alpha, 1 beta, 1 beta' and 1 omega subunit. When a sigma factor is associated with the core the holoenzyme is formed, which can initiate transcription.

It carries out the reaction RNA(n) + a ribonucleoside 5'-triphosphate = RNA(n+1) + diphosphate. DNA-dependent RNA polymerase catalyzes the transcription of DNA into RNA using the four ribonucleoside triphosphates as substrates. The chain is DNA-directed RNA polymerase subunit beta from Brevibacillus brevis (strain 47 / JCM 6285 / NBRC 100599).